The following is a 251-amino-acid chain: Ubiquinone/menaquinone biosynthesis C-methyltransferase UbiE (251 aa).

S-adenosyl-L-methionine contacts are provided by residues Thr-74, Asp-95, and 123 to 124 (NA).

This sequence belongs to the class I-like SAM-binding methyltransferase superfamily. MenG/UbiE family.

The enzyme catalyses a 2-demethylmenaquinol + S-adenosyl-L-methionine = a menaquinol + S-adenosyl-L-homocysteine + H(+). It carries out the reaction a 2-methoxy-6-(all-trans-polyprenyl)benzene-1,4-diol + S-adenosyl-L-methionine = a 5-methoxy-2-methyl-3-(all-trans-polyprenyl)benzene-1,4-diol + S-adenosyl-L-homocysteine + H(+). Its pathway is quinol/quinone metabolism; menaquinone biosynthesis; menaquinol from 1,4-dihydroxy-2-naphthoate: step 2/2. The protein operates within cofactor biosynthesis; ubiquinone biosynthesis. Methyltransferase required for the conversion of demethylmenaquinol (DMKH2) to menaquinol (MKH2) and the conversion of 2-polyprenyl-6-methoxy-1,4-benzoquinol (DDMQH2) to 2-polyprenyl-3-methyl-6-methoxy-1,4-benzoquinol (DMQH2). The polypeptide is Ubiquinone/menaquinone biosynthesis C-methyltransferase UbiE (Shewanella piezotolerans (strain WP3 / JCM 13877)).